The primary structure comprises 350 residues: Transmembrane protein 115 (350 aa).

Residues 1–19 (MQRALPGARQHLGAILASA) are Cytoplasmic-facing. Residues 1 to 205 (MQRALPGARQ…FGLLSSWVYL (205 aa)) are mediates homooligomerization. The helical transmembrane segment at 20–40 (SVVVKALCAVVLFLYLLSFAV) threads the bilayer. Over 41 to 97 (DTGCLAVTPGYLFPPNFWIWTLATHGLMEQHVWDVAISLATVVVAGRLLEPLWGALE) the chain is Lumenal. A helical membrane pass occupies residues 98 to 118 (LLIFFSVVNVSVGLLGALAYL). Residues 119 to 126 (LTYMASFN) lie on the Cytoplasmic side of the membrane. A helical membrane pass occupies residues 127-147 (LVYLFTIRIHGALGFLGGVLV). Residues 148–165 (ALKQTMGDCVVLRVPQVR) are Lumenal-facing. Residues 166 to 186 (VSVVPMLLLALLLLLRLATLL) form a helical membrane-spanning segment. The Cytoplasmic segment spans residues 187-350 (QSPALASYGF…LITLETAPLL (164 aa)). A mediates localization to the Golgi region spans residues 206 to 229 (RFYQRHSRGRGDMADHFAFATFFP). Residues 299–350 (EDQSAWPSMDDDEEEAGAKTDSPLPLEEASTPPGKVTVPESSLITLETAPLL) form a disordered region. Position 329 is a phosphothreonine (threonine 329).

Belongs to the TMEM115 family. As to quaternary structure, homooligomer. Interacts with COPB1. May interact with LMAN1. Interacts with the COG complex; probably through COG3.

The protein resides in the golgi apparatus. Its subcellular location is the golgi stack membrane. In terms of biological role, may play a role in retrograde transport of proteins from the Golgi to the endoplasmic reticulum. May indirectly play a role in protein glycosylation in the Golgi. This Mus musculus (Mouse) protein is Transmembrane protein 115.